A 425-amino-acid chain; its full sequence is Histidine--tRNA ligase (425 aa).

It belongs to the class-II aminoacyl-tRNA synthetase family. Homodimer.

The protein resides in the cytoplasm. The catalysed reaction is tRNA(His) + L-histidine + ATP = L-histidyl-tRNA(His) + AMP + diphosphate + H(+). This chain is Histidine--tRNA ligase, found in Buchnera aphidicola subsp. Baizongia pistaciae (strain Bp).